The sequence spans 87 residues: Down syndrome critical region protein 10 (87 aa).

This is Down syndrome critical region protein 10 (DSCR10) from Pan troglodytes (Chimpanzee).